Here is a 201-residue protein sequence, read N- to C-terminus: Recombination protein RecR (201 aa).

A C4-type zinc finger spans residues 60–75; the sequence is CQVCGNVDVRDPCTVC. The 96-residue stretch at 83–178 folds into the Toprim domain; that stretch reads SVLVVVAEVA…KVTRLAHGVP (96 aa).

Belongs to the RecR family.

May play a role in DNA repair. It seems to be involved in an RecBC-independent recombinational process of DNA repair. It may act with RecF and RecO. The sequence is that of Recombination protein RecR from Azorhizobium caulinodans (strain ATCC 43989 / DSM 5975 / JCM 20966 / LMG 6465 / NBRC 14845 / NCIMB 13405 / ORS 571).